The primary structure comprises 360 residues: Peptide chain release factor 1 (360 aa).

Glutamine 236 bears the N5-methylglutamine mark.

This sequence belongs to the prokaryotic/mitochondrial release factor family. Post-translationally, methylated by PrmC. Methylation increases the termination efficiency of RF1.

It is found in the cytoplasm. In terms of biological role, peptide chain release factor 1 directs the termination of translation in response to the peptide chain termination codons UAG and UAA. In Limosilactobacillus fermentum (strain NBRC 3956 / LMG 18251) (Lactobacillus fermentum), this protein is Peptide chain release factor 1.